The chain runs to 169 residues: Peptide methionine sulfoxide reductase MsrA (169 aa).

The active site involves cysteine 10.

It belongs to the MsrA Met sulfoxide reductase family.

It catalyses the reaction L-methionyl-[protein] + [thioredoxin]-disulfide + H2O = L-methionyl-(S)-S-oxide-[protein] + [thioredoxin]-dithiol. The catalysed reaction is [thioredoxin]-disulfide + L-methionine + H2O = L-methionine (S)-S-oxide + [thioredoxin]-dithiol. In terms of biological role, has an important function as a repair enzyme for proteins that have been inactivated by oxidation. Catalyzes the reversible oxidation-reduction of methionine sulfoxide in proteins to methionine. The protein is Peptide methionine sulfoxide reductase MsrA of Streptococcus pyogenes serotype M12 (strain MGAS2096).